The following is a 197-amino-acid chain: Inner membrane-spanning protein YciB (197 aa).

5 helical membrane-spanning segments follow: residues 22–42 (IYSATAALIIMVLLNVFYHWF), 48–68 (PSMMWITLILVMLFGGATLIF), 76–96 (WKPSILQWVLASGFLASHLIG), 121–141 (AAWVLFLLFSGALNLYVAYTF), and 144–164 (EIWVSFKLFGLMGLTILFLIG).

It belongs to the YciB family.

Its subcellular location is the cell inner membrane. In terms of biological role, plays a role in cell envelope biogenesis, maintenance of cell envelope integrity and membrane homeostasis. This is Inner membrane-spanning protein YciB from Magnetococcus marinus (strain ATCC BAA-1437 / JCM 17883 / MC-1).